The chain runs to 85 residues: UPF0297 protein CPR_1749 (85 aa).

Belongs to the UPF0297 family.

The chain is UPF0297 protein CPR_1749 from Clostridium perfringens (strain SM101 / Type A).